The primary structure comprises 423 residues: Glucose-1-phosphate adenylyltransferase (423 aa).

Residues tyrosine 100, glycine 165, 180-181, and serine 191 each bind alpha-D-glucose 1-phosphate; that span reads EK.

This sequence belongs to the bacterial/plant glucose-1-phosphate adenylyltransferase family. As to quaternary structure, homotetramer.

The enzyme catalyses alpha-D-glucose 1-phosphate + ATP + H(+) = ADP-alpha-D-glucose + diphosphate. It functions in the pathway glycan biosynthesis; glycogen biosynthesis. Involved in the biosynthesis of ADP-glucose, a building block required for the elongation reactions to produce glycogen. Catalyzes the reaction between ATP and alpha-D-glucose 1-phosphate (G1P) to produce pyrophosphate and ADP-Glc. The chain is Glucose-1-phosphate adenylyltransferase from Lachnospira eligens (strain ATCC 27750 / DSM 3376 / VPI C15-48 / C15-B4) (Eubacterium eligens).